A 744-amino-acid polypeptide reads, in one-letter code: Collagen alpha-1(VIII) chain (744 aa).

A signal peptide spans 1 to 24 (MAVPPRPLQLLGILFIISLNSVRL). Residues 29–118 (AYYGIKPLPP…KGEVPLASLR (90 aa)) form a nonhelical region (NC2) region. Over residues 101–110 (KEVVPKKGKG) the composition is skewed to basic and acidic residues. Disordered stretches follow at residues 101–395 (KEVV…EPGL), 412–439 (GPKGEGGVVGPQGPPGPKGEPGLQGFPG), and 457–590 (GPIG…DMGL). The triple-helical region (COL1) stretch occupies residues 119 to 572 (GEQGPRGEPG…PGPPGPPGPP (454 aa)). Residues 129 to 138 (PRGPPGPPGL) are compositionally biased toward pro residues. The segment covering 169 to 191 (KPGAMGMPGAKGEIGPKGEIGPM) has biased composition (low complexity). The span at 204 to 218 (GLPGIGKPGGPGLPG) shows a compositional bias: gly residues. Residues 298–307 (PQGLIGVPGV) show a composition bias toward low complexity. Gly residues-rich tracts occupy residues 329-338 (GFPGGKGEQG) and 412-421 (GPKGEGGVVG). Low complexity-rich tracts occupy residues 470-507 (LPGLPGVPGLLGPKGEPGIPGDQGLQGPPGIPGIVGPS) and 548-557 (PGALGPQGQP). Pro residues predominate over residues 559–579 (LPGPPGPPGPPGPPAVMPTPS). The interval 573–744 (AVMPTPSPQG…SFSGYLLYPM (172 aa)) is nonhelical region (NC1). Positions 611–744 (PAYEMPAFTA…SFSGYLLYPM (134 aa)) constitute a C1q domain.

In terms of assembly, homotrimers, or heterotrimers in association with alpha 2(VIII) type collagens. Four homotrimers can form a tetrahedron stabilized by central interacting C-terminal NC1 trimers. In terms of processing, prolines at the third position of the tripeptide repeating unit (G-X-Y) are hydroxylated in some or all of the chains. Post-translationally, proteolytically cleaved by neutrophil elastase, in vitro. Proteolytic processing produces the C-terminal NC1 domain fragment, vastatin. As to expression, high levels in calvarium, eye and skin of newborn mice; also in various epithelial, endothelial and mesenchymal cells.

The protein localises to the secreted. The protein resides in the extracellular space. It localises to the extracellular matrix. It is found in the basement membrane. In terms of biological role, macromolecular component of the subendothelium. Major component of the Descemet's membrane (basement membrane) of corneal endothelial cells. Also a component of the endothelia of blood vessels. Necessary for migration and proliferation of vascular smooth muscle cells and thus, has a potential role in the maintenance of vessel wall integrity and structure, in particular in atherogenesis. Its function is as follows. Vastatin, the C-terminal fragment comprising the NC1 domain, inhibits aortic endothelial cell proliferation and causes cell apoptosis. The protein is Collagen alpha-1(VIII) chain (Col8a1) of Mus musculus (Mouse).